Reading from the N-terminus, the 636-residue chain is Leucine-rich repeat and fibronectin type-III domain-containing protein 4 (636 aa).

A signal peptide spans 1 to 16 (MAPPLLLLLLASGAAA). Residues 17 to 48 (CPLPCVCQNLSESLSTLCAHRGLLFVPPNVDR) enclose the LRRNT domain. Residues 17–518 (CPLPCVCQNL…LQAHVLGGTL (502 aa)) lie on the Extracellular side of the membrane. N-linked (GlcNAc...) asparagine glycosylation is found at asparagine 25 and asparagine 70. LRR repeat units lie at residues 49 to 70 (RTVE…DFRN), 73 to 94 (GLVD…SFGD), 97 to 118 (SLRS…SLRG), 121 to 142 (NLQH…AFDD), 146 to 169 (SLED…GSMP), 170 to 191 (ALHT…VFAQ), and 194 to 215 (QLSR…PLFS). The 47-residue stretch at 234-280 (NPLHCNCELLWLRRLARPDDLETCASPPTLAGRYFWAVPEGEFSCEP) folds into the LRRCT domain. Residues 281–367 (PLIARHTQRL…GEATARVELR (87 aa)) enclose the Ig-like domain. A disulfide bridge connects residues cysteine 302 and cysteine 351. N-linked (GlcNAc...) asparagine glycosylation is found at asparagine 324, asparagine 333, asparagine 376, and asparagine 440. In terms of domain architecture, Fibronectin type-III spans 405-502 (SEPAVQVTEV…GCAHFSTLPA (98 aa)). Residues 519 to 539 (TVAVGGVLVAALLVFTVALLV) form a helical membrane-spanning segment. Topologically, residues 540 to 636 (RGRGAGNGRL…SAERLEESVV (97 aa)) are cytoplasmic. Residues 556–585 (VQSQTNGGTSPMPKSHPPRSPPPRPQRSCS) are disordered. A compositionally biased stretch (pro residues) spans 569-580 (KSHPPRSPPPRP). Serine 585 and serine 627 each carry phosphoserine. A PDZ-binding motif is present at residues 633-636 (ESVV).

The protein belongs to the LRFN family. In terms of assembly, can form heteromeric complexes with LRFN1, LRFN2, LRFN3 and LRFN5. Unable to form homophilic interactions across cell junctions. Interacts with DLG1, DLG2 and DLG3. Also interacts with DLG4. In terms of processing, glycosylated. In terms of tissue distribution, expressed in brain and testis. In the brain, weak, but broad expression in the cerebral cortex and diencephalic nuclei. Also detected in other parts of the central nervous system, including the olfactory bulb, pons, cerebellum, and medulla oblongata, as well as in the peripheral nervous system, such as the ganglia of cranial nerves and the dorsal root ganglion during gestation.

Its subcellular location is the membrane. Functionally, promotes neurite outgrowth in hippocampal neurons. May play a role in redistributing DLG4 to the cell periphery. In Mus musculus (Mouse), this protein is Leucine-rich repeat and fibronectin type-III domain-containing protein 4 (Lrfn4).